The following is a 231-amino-acid chain: Putative Nudix hydrolase FPV054 (231 aa).

The Nudix hydrolase domain maps to 74–217; sequence SKRRSFSEIL…SNEKYEYLHF (144 aa). The Nudix box motif lies at 125-146; that stretch reads GRVKNKESIYQCLSRELSEESD. Residue glutamate 131 participates in Mg(2+) binding. Glutamate 140 functions as the Nucleophile in the catalytic mechanism. Mg(2+)-binding residues include glutamate 144 and aspartate 165.

It belongs to the Nudix hydrolase family. Mg(2+) serves as cofactor. The cofactor is Mn(2+).

Its function is as follows. Decapping enzyme required for the removal of the 5'-end m7GpppN cap tethered to viral and host mRNAs to allow their decay in cells. May therefore accelerate viral and cellular mRNA turnover to eliminate competing host mRNAs and allow stage-specific synthesis of viral proteins. Acceleration of the turnover of cellular transcripts may even promote the shutoff of host protein synthesis. Does not cleave unmethylated RNAs or RNAs shorter than 24 nucleotides. This Vertebrata (FPV) protein is Putative Nudix hydrolase FPV054.